The primary structure comprises 322 residues: Putative MgpC-like protein MPN_367 (322 aa).

A compositionally biased stretch (low complexity) spans 1–48; that stretch reads MVGSGAAGSASSLQGNGSNSSGLKSLLRSAPVSVPPSSTSNQTLSLSN. 2 disordered regions span residues 1-59 and 118-145; these read MVGS…AVVS and DATS…EPAL. Positions 120–134 are enriched in polar residues; the sequence is TSTNLPHAAGASQTG.

Belongs to the MgpC family.

In Mycoplasma pneumoniae (strain ATCC 29342 / M129 / Subtype 1) (Mycoplasmoides pneumoniae), this protein is Putative MgpC-like protein MPN_367.